The sequence spans 215 residues: Flagellin B1 (215 aa).

The propeptide occupies 1–12 (MSVKNFMNNKKG).

This sequence belongs to the archaeal flagellin family.

It is found in the archaeal flagellum. Its function is as follows. Flagellin is the subunit protein which polymerizes to form the filaments of archaeal flagella. The polypeptide is Flagellin B1 (flaB1) (Methanococcus vannielii (strain ATCC 35089 / DSM 1224 / JCM 13029 / OCM 148 / SB)).